We begin with the raw amino-acid sequence, 366 residues long: Growth/differentiation factor 3 (366 aa).

The signal sequence occupies residues 1-22 (MQPYQRLLALGFLLLTLPWGQT). Positions 23–252 (SEFQDSDLLQ…HCHPSSRKRR (230 aa)) are excised as a propeptide. N-linked (GlcNAc...) asparagine glycans are attached at residues Asn-113 and Asn-308. Intrachain disulfides connect Cys-266–Cys-331, Cys-295–Cys-363, and Cys-299–Cys-365.

The protein belongs to the TGF-beta family. As to quaternary structure, homodimer. Heterodimer (Potential). But, in contrast to other members of this family, cannot be disulfide-linked. In terms of processing, synthesized as large precursor molecule that undergo proteolytic cleavage, releasing the pro-domain from the active, receptor binding, C-terminal region of the molecule. As to expression, primarily in adult bone marrow, spleen, thymus and adipose tissue.

The protein localises to the secreted. The protein resides in the cytoplasm. Functionally, growth factor involved in early embryonic development and adipose-tissue homeostasis. During embryogenesis controls formation of anterior visceral endoderm and mesoderm and the establishment of anterior-posterior identity through a receptor complex comprising the receptor ACVR1B and the coreceptor CRIPTO. Regulates adipose-tissue homeostasis and energy balance under nutrient overload in part by signaling through the receptor complex based on ACVR1C and CRIPTO. This chain is Growth/differentiation factor 3 (Gdf3), found in Mus musculus (Mouse).